The chain runs to 331 residues: Glucokinase (331 aa).

16-21 lines the ATP pocket; that stretch reads GDIGGT.

Belongs to the bacterial glucokinase family.

It localises to the cytoplasm. The catalysed reaction is D-glucose + ATP = D-glucose 6-phosphate + ADP + H(+). In Pseudomonas aeruginosa (strain UCBPP-PA14), this protein is Glucokinase.